The following is a 276-amino-acid chain: Tryptophan synthase alpha chain (276 aa).

Active-site proton acceptor residues include glutamate 55 and aspartate 66.

The protein belongs to the TrpA family. As to quaternary structure, tetramer of two alpha and two beta chains.

It carries out the reaction (1S,2R)-1-C-(indol-3-yl)glycerol 3-phosphate + L-serine = D-glyceraldehyde 3-phosphate + L-tryptophan + H2O. The protein operates within amino-acid biosynthesis; L-tryptophan biosynthesis; L-tryptophan from chorismate: step 5/5. In terms of biological role, the alpha subunit is responsible for the aldol cleavage of indoleglycerol phosphate to indole and glyceraldehyde 3-phosphate. The chain is Tryptophan synthase alpha chain from Gloeobacter violaceus (strain ATCC 29082 / PCC 7421).